The sequence spans 474 residues: PRAME family member 17 (474 aa).

One copy of the LRR 1; degenerate repeat lies at 97-124 (RWKLQVLDLRDVDGNFWTIWSGARALSC). The LRR 2; degenerate repeat unit spans residues 179-203 (HLCCNKVQNYSMPTSSFRNLLKRVY). One copy of the LRR 3; degenerate repeat lies at 204-230 (PDSIQELEIKRKCSLNKTGKFAPYLSQ). Residues 231–265 (MSNLRKLFLAFGYDDELYVSGQQQFVPDLDCPFLC) form an LRR 4; degenerate repeat. 5 LRR repeats span residues 266-291 (LYYPQMLYIRKISNIKEHLEHLLRCL), 292-323 (KNPLGTFIFCHAYLADQDMECLSQYPSLSQLK), 324-342 (ELHLIHILMWTTNLEPLGA), 348-375 (AATLEILTLKDCQIQDSQLRVLLPALSR), and 376-400 (CSQLTTFYFRGNETSTNALKDLLCH).

Belongs to the PRAME family.

This Homo sapiens (Human) protein is PRAME family member 17.